Reading from the N-terminus, the 774-residue chain is Lysyl oxidase homolog 2 (774 aa).

An N-terminal signal peptide occupies residues 1 to 25 (MERPLCSHLCSCLAVLALLSPLSLA). SRCR domains are found at residues 58–159 (LRLA…VVCS), 188–302 (IRAI…VSCV), 326–425 (VRLR…VRCN), and 435–544 (LRLN…VACS). 9 disulfide bridges follow: Cys84–Cys148, Cys97–Cys158, Cys128–Cys138, Cys218–Cys291, Cys231–Cys301, Cys265–Cys275, Cys351–Cys414, Cys364–Cys424, and Cys395–Cys405. An N-linked (GlcNAc...) asparagine glycan is attached at Asn288. N-linked (GlcNAc...) asparagine glycosylation occurs at Asn455. Intrachain disulfides connect Cys464–Cys530, Cys477–Cys543, and Cys511–Cys521. Residues 548–751 (PDLVLNAEMV…WMYNCHIGGS (204 aa)) form a lysyl-oxidase like region. Ca(2+) contacts are provided by Asp549 and Leu550. Cystine bridges form between Cys573–Cys625, Cys579–Cys695, Cys657–Cys673, and Cys663–Cys685. Cu cation-binding residues include His626, His628, and His630. The N-linked (GlcNAc...) asparagine glycan is linked to Asn644. Positions 653–689 (KASFCLEDTECEGDIQKNYECANFGDQGITMGCWDMY) form a cross-link, lysine tyrosylquinone (Lys-Tyr). Position 689 is a 2',4',5'-topaquinone (Tyr689). The Ca(2+) site is built by Glu722, Asp724, Asn727, and Asn728. Cys732 and Cys746 are joined by a disulfide.

Belongs to the lysyl oxidase family. In terms of assembly, component of some chromatin repressor complex. Interacts with SNAI1. Interacts with TAF10. Interacts with HSPA5. Interacts with EFEMP2. Cu cation is required as a cofactor. Lysine tyrosylquinone residue serves as cofactor. Post-translationally, the lysine tyrosylquinone cross-link (LTQ) is generated by condensation of the epsilon-amino group of a lysine with a topaquinone produced by oxidation of tyrosine. In terms of processing, N-glycosylated. N-glycosylation on Asn-455 and Asn-644 may be essential for proper folding and secretion; may be composed of a fucosylated carbohydrates attached to a trimannose N-linked glycan core.

It localises to the secreted. The protein localises to the extracellular space. It is found in the extracellular matrix. The protein resides in the basement membrane. Its subcellular location is the nucleus. It localises to the chromosome. The protein localises to the endoplasmic reticulum. The catalysed reaction is L-lysyl-[protein] + O2 + H2O = (S)-2-amino-6-oxohexanoyl-[protein] + H2O2 + NH4(+). Specifically inhibited by a mouse monoclonal antibody AB0023, inhibition occurs in a non-competitive manner. In terms of biological role, mediates the post-translational oxidative deamination of lysine residues on target proteins leading to the formation of deaminated lysine (allysine). Acts as a transcription corepressor and specifically mediates deamination of trimethylated 'Lys-4' of histone H3 (H3K4me3), a specific tag for epigenetic transcriptional activation. Shows no activity against histone H3 when it is trimethylated on 'Lys-9' (H3K9me3) or 'Lys-27' (H3K27me3) or when 'Lys-4' is monomethylated (H3K4me1) or dimethylated (H3K4me2). Also mediates deamination of methylated TAF10, a member of the transcription factor IID (TFIID) complex, which induces release of TAF10 from promoters, leading to inhibition of TFIID-dependent transcription. LOXL2-mediated deamination of TAF10 results in transcriptional repression of genes required for embryonic stem cell pluripotency including POU5F1/OCT4, NANOG, KLF4 and SOX2. Involved in epithelial to mesenchymal transition (EMT) via interaction with SNAI1 and participates in repression of E-cadherin CDH1, probably by mediating deamination of histone H3. During EMT, involved with SNAI1 in negatively regulating pericentromeric heterochromatin transcription. SNAI1 recruits LOXL2 to pericentromeric regions to oxidize histone H3 and repress transcription which leads to release of heterochromatin component CBX5/HP1A, enabling chromatin reorganization and acquisition of mesenchymal traits. Interacts with the endoplasmic reticulum protein HSPA5 which activates the IRE1-XBP1 pathway of the unfolded protein response, leading to expression of several transcription factors involved in EMT and subsequent EMT induction. When secreted into the extracellular matrix, promotes cross-linking of extracellular matrix proteins by mediating oxidative deamination of peptidyl lysine residues in precursors to fibrous collagen and elastin. Acts as a regulator of sprouting angiogenesis, probably via collagen IV scaffolding. Acts as a regulator of chondrocyte differentiation, probably by regulating expression of factors that control chondrocyte differentiation. The chain is Lysyl oxidase homolog 2 (LOXL2) from Pongo abelii (Sumatran orangutan).